Here is a 185-residue protein sequence, read N- to C-terminus: MKIAQELRTGNVVMIGNDAMVVQKAEYNKSGRNAAVVKMKFKNLLTGAGMETVYKADDKFDVVVLDRKEVTYSYFADPMYVFMDADYNQYEVEAEMMGDALNYLEDGMACEVVFYNEKAISVELPTTLVREIIYTEPAVKGDTSSGKVLKTAKLNTGFELQVPLFCNIGDKIEIDTRTNEYRSRA.

The protein belongs to the elongation factor P family.

The protein localises to the cytoplasm. Its pathway is protein biosynthesis; polypeptide chain elongation. In terms of biological role, involved in peptide bond synthesis. Stimulates efficient translation and peptide-bond synthesis on native or reconstituted 70S ribosomes in vitro. Probably functions indirectly by altering the affinity of the ribosome for aminoacyl-tRNA, thus increasing their reactivity as acceptors for peptidyl transferase. The protein is Elongation factor P of Paraburkholderia phymatum (strain DSM 17167 / CIP 108236 / LMG 21445 / STM815) (Burkholderia phymatum).